Here is an 82-residue protein sequence, read N- to C-terminus: Antimicrobial peptide Smp43 (82 aa).

The N-terminal stretch at 1–22 is a signal peptide; sequence MNRKLLLVTLMVTMLVMQPAEA. Residues 66 to 82 constitute a propeptide that is removed on maturation; it reads EAGQMPFDEFMDILYES.

It belongs to the non-disulfide-bridged peptide (NDBP) superfamily. Long chain multifunctional peptide (group 2) family. In terms of tissue distribution, expressed by the venom gland.

It is found in the secreted. The protein localises to the target cell membrane. In terms of biological role, antimicrobial peptide with moderate activity against Gram-positive bacteria and Gram-negative bacteria, as well as low activity against fungi. Acts by inducing bacterial membrane disruption. Shows activity against B.subtilis (MIC=4 ug/ml), S.epidermidis (MIC=64 ug/ml), S.aureus (MIC=32 ug/ml), E.coli (MIC=128 ug/ml), K.pneumoniae (MIC=64 ug/ml), P.aeruginosa (MIC=64 ug/ml), and C.albicans (MIC=128 ug/ml). Does not show hemolysis activity. This is Antimicrobial peptide Smp43 from Scorpio palmatus (Israeli golden scorpion).